Here is a 461-residue protein sequence, read N- to C-terminus: tRNA (guanine(10)-N(2))-methyltransferase TRMT11 (461 aa).

Belongs to the class I-like SAM-binding methyltransferase superfamily. TRM11 methyltransferase family. As to quaternary structure, part of the heterodimeric TRMT11-TRM112 methyltransferase complex; this complex forms an active tRNA methyltransferase, where TRMT112 acts as an activator of the catalytic subunit TRMT11.

The protein localises to the cytoplasm. It carries out the reaction guanosine(10) in tRNA + S-adenosyl-L-methionine = N(2)-methylguanosine(10) in tRNA + S-adenosyl-L-homocysteine + H(+). Functionally, catalytic subunit of the TRMT11-TRM112 methyltransferase complex, that specifically mediates the S-adenosyl-L-methionine-dependent N(2)-methylation of guanosine nucleotide at position 10 (m2G10) in tRNAs. This is one of the major tRNA (guanine-N(2))-methyltransferases. The protein is tRNA (guanine(10)-N(2))-methyltransferase TRMT11 of Gallus gallus (Chicken).